We begin with the raw amino-acid sequence, 357 residues long: Peptide chain release factor 1 (357 aa).

Gln236 is subject to N5-methylglutamine.

It belongs to the prokaryotic/mitochondrial release factor family. Post-translationally, methylated by PrmC. Methylation increases the termination efficiency of RF1.

It localises to the cytoplasm. Its function is as follows. Peptide chain release factor 1 directs the termination of translation in response to the peptide chain termination codons UAG and UAA. In Mycobacterium sp. (strain JLS), this protein is Peptide chain release factor 1.